Here is a 201-residue protein sequence, read N- to C-terminus: Probable molybdenum cofactor guanylyltransferase (201 aa).

GTP is bound by residues 16–18 (LAG), Lys-28, Asp-75, and Asp-107. Asp-107 contacts Mg(2+).

Belongs to the MobA family. Mg(2+) serves as cofactor.

It localises to the cytoplasm. The catalysed reaction is Mo-molybdopterin + GTP + H(+) = Mo-molybdopterin guanine dinucleotide + diphosphate. Its function is as follows. Transfers a GMP moiety from GTP to Mo-molybdopterin (Mo-MPT) cofactor (Moco or molybdenum cofactor) to form Mo-molybdopterin guanine dinucleotide (Mo-MGD) cofactor. The protein is Probable molybdenum cofactor guanylyltransferase of Mycobacterium ulcerans (strain Agy99).